Here is a 267-residue protein sequence, read N- to C-terminus: Orotidine 5'-phosphate decarboxylase (267 aa).

Lys93 serves as the catalytic Proton donor.

Belongs to the OMP decarboxylase family. Type 2 subfamily.

It carries out the reaction orotidine 5'-phosphate + H(+) = UMP + CO2. Its pathway is pyrimidine metabolism; UMP biosynthesis via de novo pathway; UMP from orotate: step 2/2. The sequence is that of Orotidine 5'-phosphate decarboxylase from Halobacterium salinarum (strain ATCC 29341 / DSM 671 / R1).